The chain runs to 288 residues: Glycine--tRNA ligase alpha subunit (288 aa).

It belongs to the class-II aminoacyl-tRNA synthetase family. As to quaternary structure, tetramer of two alpha and two beta subunits.

It is found in the cytoplasm. It catalyses the reaction tRNA(Gly) + glycine + ATP = glycyl-tRNA(Gly) + AMP + diphosphate. This is Glycine--tRNA ligase alpha subunit from Rickettsia peacockii (strain Rustic).